Reading from the N-terminus, the 473-residue chain is Glutathione reductase, mitochondrial (473 aa).

Residues Ser-30 and Gly-31 each coordinate FAD. Ser-30 contacts glutathione. Residue Arg-37 coordinates glutathione. Positions 50, 57, 58, and 66 each coordinate FAD. Cys-58 and Cys-63 form a disulfide bridge. Tyr-114 is a glutathione binding site. Residue Ala-130 coordinates FAD. Residues Ala-190, Ile-193, Glu-196, Arg-213, Arg-219, and Gly-279 each coordinate NADP(+). Asp-320 contacts FAD. Residue Leu-326 participates in NADP(+) binding. Thr-328 contributes to the FAD binding site. Arg-336 lines the glutathione pocket. Residue Val-359 participates in NADP(+) binding. His-456 serves as a coordination point for FAD. His-456 serves as the catalytic Proton acceptor.

The protein belongs to the class-I pyridine nucleotide-disulfide oxidoreductase family. FAD serves as cofactor. As to expression, expressed at all larval stages and in adults in intestine, vulva muscle, pharynx and some cells in the tail.

Its subcellular location is the cytoplasm. The protein localises to the mitochondrion. The enzyme catalyses 2 glutathione + NADP(+) = glutathione disulfide + NADPH + H(+). Catalyzes the reduction of glutathione disulfide (GSSG) to reduced glutathione (GSH). Constitutes the major mechanism to maintain a high GSH:GSSG ratio in the cytosol. Involved in resistance to oxidative stress and starvation. Together with thioredoxin reductase txtr-1, required for the reduction of disulfide groups in the cuticle during molting. This Caenorhabditis elegans protein is Glutathione reductase, mitochondrial.